The primary structure comprises 283 residues: ATP phosphoribosyltransferase (283 aa).

It belongs to the ATP phosphoribosyltransferase family. Long subfamily. Requires Mg(2+) as cofactor.

The protein resides in the cytoplasm. The catalysed reaction is 1-(5-phospho-beta-D-ribosyl)-ATP + diphosphate = 5-phospho-alpha-D-ribose 1-diphosphate + ATP. The protein operates within amino-acid biosynthesis; L-histidine biosynthesis; L-histidine from 5-phospho-alpha-D-ribose 1-diphosphate: step 1/9. With respect to regulation, feedback inhibited by histidine. Its function is as follows. Catalyzes the condensation of ATP and 5-phosphoribose 1-diphosphate to form N'-(5'-phosphoribosyl)-ATP (PR-ATP). Has a crucial role in the pathway because the rate of histidine biosynthesis seems to be controlled primarily by regulation of HisG enzymatic activity. The polypeptide is ATP phosphoribosyltransferase (Bifidobacterium longum subsp. infantis (strain ATCC 15697 / DSM 20088 / JCM 1222 / NCTC 11817 / S12)).